Consider the following 137-residue polypeptide: Large ribosomal subunit protein uL16 (137 aa).

It belongs to the universal ribosomal protein uL16 family. As to quaternary structure, part of the 50S ribosomal subunit.

Its function is as follows. Binds 23S rRNA and is also seen to make contacts with the A and possibly P site tRNAs. The chain is Large ribosomal subunit protein uL16 from Streptococcus uberis (strain ATCC BAA-854 / 0140J).